A 571-amino-acid polypeptide reads, in one-letter code: Proline--tRNA ligase (571 aa).

This sequence belongs to the class-II aminoacyl-tRNA synthetase family. ProS type 1 subfamily. In terms of assembly, homodimer.

It localises to the cytoplasm. It carries out the reaction tRNA(Pro) + L-proline + ATP = L-prolyl-tRNA(Pro) + AMP + diphosphate. In terms of biological role, catalyzes the attachment of proline to tRNA(Pro) in a two-step reaction: proline is first activated by ATP to form Pro-AMP and then transferred to the acceptor end of tRNA(Pro). As ProRS can inadvertently accommodate and process non-cognate amino acids such as alanine and cysteine, to avoid such errors it has two additional distinct editing activities against alanine. One activity is designated as 'pretransfer' editing and involves the tRNA(Pro)-independent hydrolysis of activated Ala-AMP. The other activity is designated 'posttransfer' editing and involves deacylation of mischarged Ala-tRNA(Pro). The misacylated Cys-tRNA(Pro) is not edited by ProRS. In Pseudomonas putida (strain ATCC 700007 / DSM 6899 / JCM 31910 / BCRC 17059 / LMG 24140 / F1), this protein is Proline--tRNA ligase.